A 432-amino-acid chain; its full sequence is Casein kinase II subunit alpha-4, chloroplastic (432 aa).

A chloroplast-targeting transit peptide spans 1–55 (MALRPCTGFTISSLRNASAANNNLFSLLSFSSSSPAKRNLLLSSLQDNLRRFASS). The disordered stretch occupies residues 63–83 (LRNQQQQHQQQQQSRVKEKSE). The segment covering 66 to 75 (QQQQHQQQQQ) has biased composition (low complexity). The Protein kinase domain maps to 132–417 (YEVVRKVGRG…AKEAMAHPYF (286 aa)). ATP-binding positions include 138 to 146 (VGRGKYSEV) and K161. The Proton acceptor role is filled by D249.

Belongs to the protein kinase superfamily. Ser/Thr protein kinase family. CK2 subfamily. Tetramer of two alpha and two beta chains. Expressed in root tips, lateral root primordia, cotyledons, leaf primordia, sepals, filaments, stigma, and anthers.

Its subcellular location is the plastid. It localises to the chloroplast. It carries out the reaction L-seryl-[protein] + ATP = O-phospho-L-seryl-[protein] + ADP + H(+). The enzyme catalyses L-threonyl-[protein] + ATP = O-phospho-L-threonyl-[protein] + ADP + H(+). Casein kinases are operationally defined by their preferential utilization of acidic proteins such as caseins as substrates. The alpha chain contains the catalytic site. Involved in the regulation of various developmental processes. Involved in the regulation of plant growth and flowering time. Involved in retrograde signaling in plant responses to abscisic acid (ABA) and heat stress. May act as an enhancing factor in abiotic stress signaling through modulation of the expression of some molecular players in retrograde signaling. Phosphorylates RuBisCo activase (RCA) at Thr-78. The chain is Casein kinase II subunit alpha-4, chloroplastic from Arabidopsis thaliana (Mouse-ear cress).